The following is a 451-amino-acid chain: Tubulin alpha-2 chain (451 aa).

GTP is bound at residue Q11. At K40 the chain carries N6-acetyllysine. Residues E71, G144, T145, T179, N206, and N228 each contribute to the GTP site. E71 serves as a coordination point for Mg(2+). Residue E254 is part of the active site.

This sequence belongs to the tubulin family. In terms of assembly, dimer of alpha and beta chains. A typical microtubule is a hollow water-filled tube with an outer diameter of 25 nm and an inner diameter of 15 nM. Alpha-beta heterodimers associate head-to-tail to form protofilaments running lengthwise along the microtubule wall with the beta-tubulin subunit facing the microtubule plus end conferring a structural polarity. Microtubules usually have 13 protofilaments but different protofilament numbers can be found in some organisms and specialized cells. It depends on Mg(2+) as a cofactor. In terms of processing, undergoes a tyrosination/detyrosination cycle, the cyclic removal and re-addition of a C-terminal tyrosine residue by the enzymes tubulin tyrosine carboxypeptidase (TTCP) and tubulin tyrosine ligase (TTL), respectively. Post-translationally, acetylation of alpha chains at Lys-40 stabilizes microtubules and affects affinity and processivity of microtubule motors. This modification has a role in multiple cellular functions, ranging from cell motility, cell cycle progression or cell differentiation to intracellular trafficking and signaling.

The protein resides in the cytoplasm. It is found in the cytoskeleton. It catalyses the reaction GTP + H2O = GDP + phosphate + H(+). Its function is as follows. Tubulin is the major constituent of microtubules, a cylinder consisting of laterally associated linear protofilaments composed of alpha- and beta-tubulin heterodimers. Microtubules grow by the addition of GTP-tubulin dimers to the microtubule end, where a stabilizing cap forms. Below the cap, tubulin dimers are in GDP-bound state, owing to GTPase activity of alpha-tubulin. This is Tubulin alpha-2 chain (TUBA2) from Hordeum vulgare (Barley).